A 993-amino-acid polypeptide reads, in one-letter code: Glycine dehydrogenase (decarboxylating) (993 aa).

N6-(pyridoxal phosphate)lysine is present on Lys715.

It belongs to the GcvP family. In terms of assembly, the glycine cleavage system is composed of four proteins: P, T, L and H. It depends on pyridoxal 5'-phosphate as a cofactor.

It carries out the reaction N(6)-[(R)-lipoyl]-L-lysyl-[glycine-cleavage complex H protein] + glycine + H(+) = N(6)-[(R)-S(8)-aminomethyldihydrolipoyl]-L-lysyl-[glycine-cleavage complex H protein] + CO2. In terms of biological role, the glycine cleavage system catalyzes the degradation of glycine. The P protein binds the alpha-amino group of glycine through its pyridoxal phosphate cofactor; CO(2) is released and the remaining methylamine moiety is then transferred to the lipoamide cofactor of the H protein. The polypeptide is Glycine dehydrogenase (decarboxylating) (Xylella fastidiosa (strain Temecula1 / ATCC 700964)).